We begin with the raw amino-acid sequence, 379 residues long: Alkanesulfonate monooxygenase (379 aa).

Belongs to the SsuD family.

The enzyme catalyses an alkanesulfonate + FMNH2 + O2 = an aldehyde + FMN + sulfite + H2O + 2 H(+). Functionally, catalyzes the desulfonation of aliphatic sulfonates. The sequence is that of Alkanesulfonate monooxygenase from Pseudomonas syringae pv. tomato (strain ATCC BAA-871 / DC3000).